The primary structure comprises 1178 residues: MLQRISSKLHRRFLSGLLRVKHYPLRRILLPLILLQIIIITFIWSNSPQRNGLGRDADYLLPNYNELDSDDDSWYSILTSSFKNDRKIQFAKTLYENLKFGTNPKWVNEYTLQNDLLSVKMGPRKGSKLESVDELKFYDFDPRLTWSVVLNHLQNNDADQPEKLPFSWYDWTTFHELNKLISIDKTVLPCNFLFQSAFDKESLEAIETELGEPLFLYERPKYAQKLWYKAARNQDRIKDSKELKKHCSKLFTPDGHGSPKGLRFNTQFQIKELYDKVRPEVYQLQARNYILTTQSHPLSISIIESDNSTYQVPLQTEKSKNLVQSGLLQEYINDNINSTNKRKKNKQDVEFNHNRLFQEFVNNDQVNSLYKLEIEETDKFTFDKDLVYLSPSDFKFDASKKIEELEEQKKLYPDKFSAHNENYLNSLKNSVKTSPALQRKFFYEAGAVKQYKGMGFHRDKRFFNVDTLINDKQEYQARLNSMIRTFQKFTKANGIISWLSHGTLYGYLYNGMAFPWDNDFDLQMPIKHLQLLSQYFNQSLILEDPRQGNGRYFLDVSDSLTVRINGNGKNNIDARFIDVDTGLYIDITGLASTSAPSRDYLNSYIEERLQEEHLDINNIPESNGETATLPDKVDDGLVNMATLNITELRDYITSDENKNHKRVPTDTDLKDLLKKELEELPKSKTIENKLNPKQRYFLNEKLKLYNCRNNHFNSFEELSPLINTVFHGVPALIPHRHTYCLHNEYHVPDRYAFDAYKNTAYLPEFRFWFDYDGLKKCSNINSWYPNIPSINSWNPNLLKEISSTKFESKLFDSNKVSEYSFKNLSMDDVRLIYKNIPKAGFIEVFTNLYNSFNVTAYRQKELEIQYCQNLTFIEKKKLLHQLRINVAPKLSSPAKDPFLFGYEKAMWKDLSKSMNQTTLDQVTKIVHEEYVGKIIDLSESLKYRNFSLFNITFDETGTTLDDNTEDYTPANTVEVNPVDFKSNLNFSSNSFLDLNSYGLDLFAPTLSDVNRKGIQMFDKDPIIVYEDYAYAKLLEERKRREKKKKEEEEKKKKEEEEKKKKEEEEKKKKEEEEKKKKEEEEKKKKEEEEKKKQEEEEKKKKEEEEKKKQEEGEKMKNEDEENKKNEDEEKKKNEEEEKKKQEEKNKKNEDEEKKKQEEEEKKKNEEEEKKKQEEGHSN.

At 1–27 (MLQRISSKLHRRFLSGLLRVKHYPLRR) the chain is on the cytoplasmic side. A helical; Signal-anchor for type II membrane protein membrane pass occupies residues 28–48 (ILLPLILLQIIIITFIWSNSP). Over 49–1178 (QRNGLGRDAD…KKKQEEGHSN (1130 aa)) the chain is Lumenal. The DXD signature appears at 519-521 (DFD). The interval 1041–1178 (EKKKKEEEEK…KKKQEEGHSN (138 aa)) is disordered. 6 tandem repeats follow at residues 1042–1049 (KKKKEEEE), 1050–1057 (KKKKEEEE), 1058–1065 (KKKKEEEE), 1066–1073 (KKKKEEEE), 1074–1081 (KKKKEEEE), and 1082–1089 (KKKKEEEE). Residues 1042-1174 (KKKKEEEEKK…EEEEKKKQEE (133 aa)) form a 17 X 8 AA tandem repeats of K-K-K-K-E-E-E-E region. The 7; approximate repeat unit spans residues 1090-1097 (KKKQEEEE). The stretch at 1098–1105 (KKKKEEEE) is repeat 8. Residues 1106–1113 (KKKQEEGE) form a 9; approximate repeat. The stretch at 1114-1121 (KMKNEDEE) is one 10; approximate repeat. Residues 1122–1129 (NKKNEDEE) form an 11; approximate repeat. Repeat unit 12 spans residues 1130–1137 (KKKNEEEE). The stretch at 1138–1144 (KKKQEEK) is one 13; approximate repeat. The 14; approximate repeat unit spans residues 1145–1152 (NKKNEDEE). One copy of the 15; approximate repeat lies at 1153–1160 (KKKQEEEE). Residues 1161–1168 (KKKNEEEE) form a 16; approximate repeat. Residues 1169–1174 (KKKQEE) form a 17; truncated repeat.

This sequence belongs to the MNN4 family.

The protein localises to the golgi apparatus membrane. Functionally, golgi apparatus protein involved in N-glycan mannosylphosphorylation. While MNN4 seems to have a regulatory role in N-glycan mannosylphosphorylation, a transferase activity of MNN4 can not be ruled out. Mediates mannosylphosphate transfer in both the core and outer chain portions of N-linked oligosaccharides. Has partially redundant function with MNN14. This chain is Mannosyltransferase regulator 4, found in Saccharomyces cerevisiae (strain ATCC 204508 / S288c) (Baker's yeast).